A 155-amino-acid chain; its full sequence is Small ribosomal subunit protein bS6 (155 aa).

Positions 115–137 (EADAAKAEADAARVEAEAKKAET) are enriched in basic and acidic residues. The interval 115 to 155 (EADAAKAEADAARVEAEAKKAETDETDETVDAETPENEEEN) is disordered. Acidic residues predominate over residues 138 to 155 (DETDETVDAETPENEEEN).

The protein belongs to the bacterial ribosomal protein bS6 family.

Binds together with bS18 to 16S ribosomal RNA. This chain is Small ribosomal subunit protein bS6, found in Desulforapulum autotrophicum (strain ATCC 43914 / DSM 3382 / VKM B-1955 / HRM2) (Desulfobacterium autotrophicum).